Reading from the N-terminus, the 334-residue chain is Holliday junction branch migration complex subunit RuvB (334 aa).

The segment at 1–182 (MNERMVDQSM…FGVHLRLEYY (182 aa)) is large ATPase domain (RuvB-L). Residues leucine 21, arginine 22, glycine 63, lysine 66, threonine 67, threonine 68, 129-131 (EDF), arginine 172, tyrosine 182, and arginine 219 contribute to the ATP site. Threonine 67 is a binding site for Mg(2+). Residues 183–253 (NESDLKEIII…TTKHALGLLQ (71 aa)) form a small ATPAse domain (RuvB-S) region. Residues 256–334 (QHGLDYIDHK…HFAKSNEERG (79 aa)) form a head domain (RuvB-H) region. Residues arginine 292, arginine 311, and arginine 316 each coordinate DNA.

It belongs to the RuvB family. As to quaternary structure, homohexamer. Forms an RuvA(8)-RuvB(12)-Holliday junction (HJ) complex. HJ DNA is sandwiched between 2 RuvA tetramers; dsDNA enters through RuvA and exits via RuvB. An RuvB hexamer assembles on each DNA strand where it exits the tetramer. Each RuvB hexamer is contacted by two RuvA subunits (via domain III) on 2 adjacent RuvB subunits; this complex drives branch migration. In the full resolvosome a probable DNA-RuvA(4)-RuvB(12)-RuvC(2) complex forms which resolves the HJ.

It localises to the cytoplasm. It carries out the reaction ATP + H2O = ADP + phosphate + H(+). The RuvA-RuvB-RuvC complex processes Holliday junction (HJ) DNA during genetic recombination and DNA repair, while the RuvA-RuvB complex plays an important role in the rescue of blocked DNA replication forks via replication fork reversal (RFR). RuvA specifically binds to HJ cruciform DNA, conferring on it an open structure. The RuvB hexamer acts as an ATP-dependent pump, pulling dsDNA into and through the RuvAB complex. RuvB forms 2 homohexamers on either side of HJ DNA bound by 1 or 2 RuvA tetramers; 4 subunits per hexamer contact DNA at a time. Coordinated motions by a converter formed by DNA-disengaged RuvB subunits stimulates ATP hydrolysis and nucleotide exchange. Immobilization of the converter enables RuvB to convert the ATP-contained energy into a lever motion, pulling 2 nucleotides of DNA out of the RuvA tetramer per ATP hydrolyzed, thus driving DNA branch migration. The RuvB motors rotate together with the DNA substrate, which together with the progressing nucleotide cycle form the mechanistic basis for DNA recombination by continuous HJ branch migration. Branch migration allows RuvC to scan DNA until it finds its consensus sequence, where it cleaves and resolves cruciform DNA. This chain is Holliday junction branch migration complex subunit RuvB, found in Staphylococcus aureus (strain N315).